The following is a 132-amino-acid chain: Phosphoribosyl-AMP cyclohydrolase (132 aa).

Aspartate 86 provides a ligand contact to Mg(2+). Cysteine 87 lines the Zn(2+) pocket. Mg(2+) contacts are provided by aspartate 88 and aspartate 90. Cysteine 103 and cysteine 110 together coordinate Zn(2+).

It belongs to the PRA-CH family. As to quaternary structure, homodimer. Requires Mg(2+) as cofactor. It depends on Zn(2+) as a cofactor.

Its subcellular location is the cytoplasm. It carries out the reaction 1-(5-phospho-beta-D-ribosyl)-5'-AMP + H2O = 1-(5-phospho-beta-D-ribosyl)-5-[(5-phospho-beta-D-ribosylamino)methylideneamino]imidazole-4-carboxamide. It participates in amino-acid biosynthesis; L-histidine biosynthesis; L-histidine from 5-phospho-alpha-D-ribose 1-diphosphate: step 3/9. Its function is as follows. Catalyzes the hydrolysis of the adenine ring of phosphoribosyl-AMP. This chain is Phosphoribosyl-AMP cyclohydrolase, found in Haloquadratum walsbyi (strain DSM 16790 / HBSQ001).